Consider the following 652-residue polypeptide: Carboxypeptidase S1 homolog A (652 aa).

Residues methionine 1–alanine 19 form the signal peptide. Cysteine 50 and cysteine 121 are disulfide-bonded. 6 N-linked (GlcNAc...) asparagine glycosylation sites follow: asparagine 77, asparagine 132, asparagine 161, asparagine 168, asparagine 184, and asparagine 202. Serine 238 is an active-site residue. N-linked (GlcNAc...) asparagine glycans are attached at residues asparagine 260, asparagine 299, asparagine 347, and asparagine 410. 2 disulfide bridges follow: cysteine 325-cysteine 361 and cysteine 332-cysteine 354. Residue aspartate 458 is part of the active site. Cysteine 461 is a binding site for substrate. 3 N-linked (GlcNAc...) asparagine glycosylation sites follow: asparagine 474, asparagine 492, and asparagine 505. Histidine 516 is a catalytic residue. Glutamate 517 lines the substrate pocket. N-linked (GlcNAc...) asparagine glycosylation occurs at asparagine 594. Residues alanine 608 to alanine 628 are disordered. Residues threonine 618–alanine 628 show a composition bias toward low complexity. The GPI-anchor amidated glycine moiety is linked to residue glycine 629. A propeptide spans serine 630 to leucine 652 (removed in mature form).

This sequence belongs to the peptidase S10 family.

It localises to the cell membrane. The enzyme catalyses Preferential release of a C-terminal arginine or lysine residue.. Its function is as follows. Extracellular serine carboxypeptidase that contributes to pathogenicity. The polypeptide is Carboxypeptidase S1 homolog A (SCPA) (Trichophyton verrucosum (strain HKI 0517)).